A 313-amino-acid chain; its full sequence is Isoaspartyl peptidase (313 aa).

Threonine 179 serves as the catalytic Nucleophile. Residues 207 to 210 (RVGD) and 230 to 233 (TGTG) contribute to the substrate site.

The protein belongs to the Ntn-hydrolase family. In terms of assembly, heterotetramer of two alpha and two beta chains arranged as a dimer of alpha/beta heterodimers. Post-translationally, autocleaved. Generates the alpha and beta subunits. The beta subunit is thought to be responsible for the nucleophile hydrolase activity.

It carries out the reaction Cleavage of a beta-linked Asp residue from the N-terminus of a polypeptide.. In terms of biological role, degrades proteins damaged by L-isoaspartyl residue formation (also known as beta-Asp residues). Degrades L-isoaspartyl-containing di- and tripeptides. Acts best on iso-Asp-Leu, followed by iso-Asp-Ala, -His and to a lesser extent iso-Asp-Lys, -Phe and iso-Asp-Leu-Ala. Does not act on internal iso-Asp bonds (Als-iso-Asp-Leu-Ala). Does not act on alpha-Asp bonds. Has poor L-asparaginase activity. The sequence is that of Isoaspartyl peptidase (iaaA) from Salmonella typhimurium (strain LT2 / SGSC1412 / ATCC 700720).